A 176-amino-acid polypeptide reads, in one-letter code: Large ribosomal subunit protein uL10 (176 aa).

This sequence belongs to the universal ribosomal protein uL10 family. Part of the ribosomal stalk of the 50S ribosomal subunit. The N-terminus interacts with L11 and the large rRNA to form the base of the stalk. The C-terminus forms an elongated spine to which L12 dimers bind in a sequential fashion forming a multimeric L10(L12)X complex.

Functionally, forms part of the ribosomal stalk, playing a central role in the interaction of the ribosome with GTP-bound translation factors. This Dehalococcoides mccartyi (strain ATCC BAA-2100 / JCM 16839 / KCTC 5957 / BAV1) protein is Large ribosomal subunit protein uL10.